The primary structure comprises 373 residues: Probable protein phosphatase 2C 73 (373 aa).

The 294-residue stretch at 61–354 (LASLFSKRGE…DDMSVVCLFL (294 aa)) folds into the PPM-type phosphatase domain. Mn(2+)-binding residues include Asp97, Gly98, Asp299, and Asp345.

Belongs to the PP2C family. It depends on Mg(2+) as a cofactor. Mn(2+) serves as cofactor.

It carries out the reaction O-phospho-L-seryl-[protein] + H2O = L-seryl-[protein] + phosphate. The enzyme catalyses O-phospho-L-threonyl-[protein] + H2O = L-threonyl-[protein] + phosphate. In Arabidopsis thaliana (Mouse-ear cress), this protein is Probable protein phosphatase 2C 73 (PPC6-7).